Reading from the N-terminus, the 367-residue chain is Phosphoribosylaminoimidazole-succinocarboxamide synthase (367 aa).

It belongs to the SAICAR synthetase family.

The catalysed reaction is 5-amino-1-(5-phospho-D-ribosyl)imidazole-4-carboxylate + L-aspartate + ATP = (2S)-2-[5-amino-1-(5-phospho-beta-D-ribosyl)imidazole-4-carboxamido]succinate + ADP + phosphate + 2 H(+). It participates in purine metabolism; IMP biosynthesis via de novo pathway; 5-amino-1-(5-phospho-D-ribosyl)imidazole-4-carboxamide from 5-amino-1-(5-phospho-D-ribosyl)imidazole-4-carboxylate: step 1/2. The sequence is that of Phosphoribosylaminoimidazole-succinocarboxamide synthase from Shewanella baltica (strain OS185).